Consider the following 497-residue polypeptide: MTGSEIFLASKRAAITYDTDPATGEPRAWLAPGGTGNVVAEQAGVLNISWIASADSEDDRRASALNPDGVTMELHSGREILVRLIRHDPAVFRNVQNFMTANLMWAANNYGWDRWTQPSFGSDAREGWADFGRFTRDFADAILKSSAQSADPVYLVHDYQLVGVPALLREQRPDAPILLFVHIPWPSADYWRILPKEIRTGILHGMLPATTIGFFADRWCRNFLESVADLLPDARIDREAMTVEWRGHRTRLRTMPLGYSPLTLDGRNPQLPEGIEEWADGHRLVVHSGRTDPIKNAERAVRAFVLAARGGGLEKTRMLVRMNPNRLYVPANADYVHRVETAVAEANAELGSDTVRIDNDNDVNHTIACFRRADLLIFNSTVDGQNLSTFEAPLVNERDADVILSETCGAAEVLGEYCRSVNPFDLVEQAEAISAALAAGPRQRAEAAARRRDAARPWTLEAWVQAQLDGLAADHAARTATAERFDTAPAVSTRADL.

Asp-158 is a GDP-valienol binding site. His-182 is a validamine 7-phosphate binding site. GDP-valienol-binding positions include Arg-290, Lys-295, Arg-321, 325-326, 361-362, and Thr-366; these read NR and ND. Position 383–386 (383–386) interacts with validamine 7-phosphate; it reads DGQN. GDP-valienol is bound by residues 387-388 and Glu-391; that span reads LS.

It belongs to the glycosyltransferase 20 family. Homodimer.

The catalysed reaction is validamine 7-phosphate + GDP-valienol = validoxylamine A 7'-phosphate + GDP + H(+). Its function is as follows. Involved in the biosynthesis of the antifungal agent validamycin A. Catalyzes the condensation between GDP-valienol and validamine 7-phosphate via a nonglycosidic C-N bond formation to yield validoxylamine A 7'-phosphate. This is Validamine 7-phosphate valienyltransferase from Streptomyces hygroscopicus subsp. limoneus.